The following is a 259-amino-acid chain: Phosphate import ATP-binding protein PstB (259 aa).

In terms of domain architecture, ABC transporter spans 5 to 248; that stretch reads IDVSGLHVYY…NKIFTKPEKK (244 aa). 37–44 lines the ATP pocket; the sequence is GSSGCGKS.

The protein belongs to the ABC transporter superfamily. Phosphate importer (TC 3.A.1.7) family. As to quaternary structure, the complex is composed of two ATP-binding proteins (PstB), two transmembrane proteins (PstC and PstA) and a solute-binding protein (PstS).

The protein resides in the cell membrane. It catalyses the reaction phosphate(out) + ATP + H2O = ADP + 2 phosphate(in) + H(+). Functionally, part of the ABC transporter complex PstSACB involved in phosphate import. Responsible for energy coupling to the transport system. In Thermobifida fusca (strain YX), this protein is Phosphate import ATP-binding protein PstB.